The sequence spans 433 residues: Amino-acid acetyltransferase (433 aa).

Residues 287-426 (ELVREAAIED…ASLYNYQRNS (140 aa)) form the N-acetyltransferase domain.

This sequence belongs to the acetyltransferase family. ArgA subfamily.

The protein localises to the cytoplasm. It carries out the reaction L-glutamate + acetyl-CoA = N-acetyl-L-glutamate + CoA + H(+). It functions in the pathway amino-acid biosynthesis; L-arginine biosynthesis; N(2)-acetyl-L-ornithine from L-glutamate: step 1/4. The protein is Amino-acid acetyltransferase of Pseudomonas fluorescens (strain SBW25).